The primary structure comprises 424 residues: tRNA (guanine-N(7)-)-methyltransferase non-catalytic subunit wuho (424 aa).

Positions 42-92 (LKGHTSQSQESCTAAAAASTATAASGQAPGGKEQQLANQPEEGGTSASASG) are disordered. The segment covering 46-68 (TSQSQESCTAAAAASTATAASGQ) has biased composition (low complexity). 4 WD repeats span residues 96–137 (ATST…ARLL), 184–223 (GHLS…DIHS), 227–265 (GHRE…ELLQ), and 324–364 (AGSW…PASS).

This sequence belongs to the WD repeat TRM82 family. As to quaternary structure, forms a heterodimer with the catalytic subunit Mettl1. Interacts with mei-P26 and weakly interacts with bgcn; required for the function or formation of the mei-P26-bgcn-bam-sxl complex. Interacts with nanos; may be involved in mei-P26-dependent derepression of the BMP signaling pathway. Interacts with Myc; the interaction may be mediated by mei-P26 and may be involved in the regulation of ribosome biogenesis. In testis, it is present at high level in hub cells, a niche for germline stem cells of testis. Ubiquitously expressed in all testicular cells throughout spermatogenesis. Ubiquitously expressed in all germline and somatic cells of the ovary.

Its subcellular location is the nucleus. It localises to the cytoplasm. It functions in the pathway tRNA modification; N(7)-methylguanine-tRNA biosynthesis. In terms of biological role, required for the Mettl1-dependent formation of N(7)-methylguanine at position 46 (m7G46) in tRNA. In the Mettl1-wuho methyltransferase complex, it is required to stabilize and induce conformational changes of the catalytic subunit. Required for binding of nanos mRNA and repression of translation by the mei-P26-bgcn-bam-sxl complex. May cooperate with mei-P26 and nanos to derepress the BMP signaling pathway. May cooperate with mei-P26 to suppress expression of a subset of microRNAs. May cooperate with mei-P26 to regulate bam expression levels in germline cells during gametogenesis. Required to promote mitosis to meiosis transition during gametogenesis. May regulate germline cell division in part by regulating ribosome biogenesis. In Drosophila melanogaster (Fruit fly), this protein is tRNA (guanine-N(7)-)-methyltransferase non-catalytic subunit wuho.